The following is a 361-amino-acid chain: Transcription factor MafA (361 aa).

The residue at position 14 (S14) is a Phosphoserine. A Glycyl lysine isopeptide (Lys-Gly) (interchain with G-Cter in SUMO2) cross-link involves residue K32. 2 disordered regions span residues 40 to 105 (RFCH…VGGA) and 175 to 228 (GGAD…AGHH). Low complexity predominate over residues 46 to 76 (PPGSLSSTPLSTPCSSVPSSPSFCAPSPGTG). At S49 the chain carries Phosphoserine. A phosphothreonine mark is found at T53 and T57. Phosphoserine occurs at positions 61 and 65. Residues 183 to 211 (GHHHGAHHTAHHHHSAHHHHHHHHHHGGS) show a composition bias toward basic residues. Gly residues predominate over residues 212 to 226 (GHHGGGAGHGGGGAG). Residues 262-287 (RLKQKRRTLKNRGYAQSCRFKRVQQR) form a basic motif region. One can recognise a bZIP domain in the interval 262–325 (RLKQKRRTLK…DLYKEKYEKL (64 aa)). A leucine-zipper region spans residues 290 to 311 (LESEKCQLQSQVEQLKLEVGRL). Positions 324–361 (KLAGRGGPGGAGGAGFPREPSPAQAGPGAAKGAPDFFL) are disordered. Positions 327-338 (GRGGPGGAGGAG) are enriched in gly residues. The span at 345–361 (PAQAGPGAAKGAPDFFL) shows a compositional bias: low complexity.

The protein belongs to the bZIP family. In terms of assembly, forms homodimers. Monomers and dimers are able to bind DNA, but the off-rate is faster for monomers. Interacts with NEUROD1 and PDX1. May interact with MAFB, FOS, JUN and PCAF. In terms of processing, ubiquitinated, leading to its degradation by the proteasome. Phosphorylated at tyrosines.

It localises to the nucleus. Transcription factor that activates insulin gene expression. Acts synergistically with NEUROD1/BETA2 and PDX1. Binds the insulin enhancer C1/RIPE3b element. Binds to consensus TRE-type MARE 5'-TGCTGACTCAGCA-3' DNA sequence. The polypeptide is Transcription factor MafA (Mafa) (Rattus norvegicus (Rat)).